Here is a 180-residue protein sequence, read N- to C-terminus: ATP synthase subunit delta (180 aa).

Belongs to the ATPase delta chain family. F-type ATPases have 2 components, F(1) - the catalytic core - and F(0) - the membrane proton channel. F(1) has five subunits: alpha(3), beta(3), gamma(1), delta(1), epsilon(1). F(0) has three main subunits: a(1), b(2) and c(10-14). The alpha and beta chains form an alternating ring which encloses part of the gamma chain. F(1) is attached to F(0) by a central stalk formed by the gamma and epsilon chains, while a peripheral stalk is formed by the delta and b chains.

The protein localises to the cell membrane. Functionally, f(1)F(0) ATP synthase produces ATP from ADP in the presence of a proton or sodium gradient. F-type ATPases consist of two structural domains, F(1) containing the extramembraneous catalytic core and F(0) containing the membrane proton channel, linked together by a central stalk and a peripheral stalk. During catalysis, ATP synthesis in the catalytic domain of F(1) is coupled via a rotary mechanism of the central stalk subunits to proton translocation. This protein is part of the stalk that links CF(0) to CF(1). It either transmits conformational changes from CF(0) to CF(1) or is implicated in proton conduction. This is ATP synthase subunit delta from Bacillus cereus (strain G9842).